A 238-amino-acid polypeptide reads, in one-letter code: Dolichyldiphosphatase 1 (238 aa).

A run of 4 helical transmembrane segments spans residues 33–53, 100–120, 130–150, and 162–182; these read LAYL…LIIF, PSSH…FLYL, FLDL…AFLV, and WSQV…WFIF.

The protein belongs to the dolichyldiphosphatase family.

The protein localises to the endoplasmic reticulum membrane. It catalyses the reaction a di-trans,poly-cis-dolichyl diphosphate + H2O = a di-trans,poly-cis-dolichyl phosphate + phosphate + H(+). It functions in the pathway protein modification; protein glycosylation. Required for efficient N-glycosylation. Necessary for maintaining optimal levels of dolichol-linked oligosaccharides. Hydrolyzes dolichyl pyrophosphate at a very high rate and dolichyl monophosphate at a much lower rate. Does not act on phosphatidate. The polypeptide is Dolichyldiphosphatase 1 (DOLPP1) (Homo sapiens (Human)).